Reading from the N-terminus, the 540-residue chain is Chaperonin GroEL 2 (540 aa).

ATP is bound by residues 30–33 (TLGP), K51, 87–91 (DGTTT), G415, 479–481 (NAA), and D495.

This sequence belongs to the chaperonin (HSP60) family. As to quaternary structure, forms a cylinder of 14 subunits composed of two heptameric rings stacked back-to-back. Interacts with the co-chaperonin GroES.

The protein resides in the cytoplasm. It carries out the reaction ATP + H2O + a folded polypeptide = ADP + phosphate + an unfolded polypeptide.. Functionally, together with its co-chaperonin GroES, plays an essential role in assisting protein folding. The GroEL-GroES system forms a nano-cage that allows encapsulation of the non-native substrate proteins and provides a physical environment optimized to promote and accelerate protein folding. This is Chaperonin GroEL 2 from Burkholderia vietnamiensis (strain G4 / LMG 22486) (Burkholderia cepacia (strain R1808)).